The sequence spans 317 residues: uncharacterized protein (317 aa).

Positions 1–60 constitute an HTH lysR-type domain; it reads MKHELSSMKAFVILAESSSFNNAAKLLNITQPALTRRIKKMEEDLHVQLFERTTRKVTLT. A DNA-binding region (H-T-H motif) is located at residues 20-40; it reads FNNAAKLLNITQPALTRRIKK.

The protein belongs to the LysR transcriptional regulatory family.

This is an uncharacterized protein from Escherichia coli (strain K12).